Consider the following 552-residue polypeptide: Putative transport protein YPN_3727 (552 aa).

The next 6 helical transmembrane spans lie at 1-21 (MSAI…GLWI), 26-46 (IYGV…VGHF), 65-85 (FGLI…FFSS), 96-116 (FAIL…KLFA), 119-139 (LPII…LGAA), and 158-178 (MGYA…MWLI). RCK C-terminal domains are found at residues 192-276 (AFDS…VVGE) and 279-361 (DVTL…IVGN). 6 helical membrane passes run 371-391 (MLPV…PLFV), 393-413 (GFPA…ALIL), 439-459 (IVLF…NTLV), 464-484 (LAWI…VGIL), 493-513 (YLTL…LAFA), and 530-550 (VYPL…VLFW).

This sequence belongs to the AAE transporter (TC 2.A.81) family. YidE subfamily.

Its subcellular location is the cell membrane. The sequence is that of Putative transport protein YPN_3727 from Yersinia pestis bv. Antiqua (strain Nepal516).